A 351-amino-acid chain; its full sequence is Ferrochelatase (351 aa).

Residues His-184 and Glu-265 each coordinate Fe cation.

The protein belongs to the ferrochelatase family.

It localises to the cytoplasm. The catalysed reaction is heme b + 2 H(+) = protoporphyrin IX + Fe(2+). Its pathway is porphyrin-containing compound metabolism; protoheme biosynthesis; protoheme from protoporphyrin-IX: step 1/1. Functionally, catalyzes the ferrous insertion into protoporphyrin IX. This chain is Ferrochelatase, found in Rhodopirellula baltica (strain DSM 10527 / NCIMB 13988 / SH1).